Here is a 329-residue protein sequence, read N- to C-terminus: Porphobilinogen deaminase (329 aa).

C250 is subject to S-(dipyrrolylmethanemethyl)cysteine.

This sequence belongs to the HMBS family. As to quaternary structure, monomer. Dipyrromethane is required as a cofactor.

The enzyme catalyses 4 porphobilinogen + H2O = hydroxymethylbilane + 4 NH4(+). Its pathway is porphyrin-containing compound metabolism; protoporphyrin-IX biosynthesis; coproporphyrinogen-III from 5-aminolevulinate: step 2/4. Its function is as follows. Tetrapolymerization of the monopyrrole PBG into the hydroxymethylbilane pre-uroporphyrinogen in several discrete steps. The polypeptide is Porphobilinogen deaminase (Burkholderia mallei (strain NCTC 10247)).